We begin with the raw amino-acid sequence, 213 residues long: Orotate phosphoribosyltransferase (213 aa).

Lys26 is a 5-phospho-alpha-D-ribose 1-diphosphate binding site. 34-35 (FF) contacts orotate. Residues 72-73 (YK), Arg99, Lys100, Lys103, His105, and 124-132 (DDVITAGTA) each bind 5-phospho-alpha-D-ribose 1-diphosphate. Orotate contacts are provided by Thr128 and Arg156.

The protein belongs to the purine/pyrimidine phosphoribosyltransferase family. PyrE subfamily. As to quaternary structure, homodimer. The cofactor is Mg(2+).

The enzyme catalyses orotidine 5'-phosphate + diphosphate = orotate + 5-phospho-alpha-D-ribose 1-diphosphate. The protein operates within pyrimidine metabolism; UMP biosynthesis via de novo pathway; UMP from orotate: step 1/2. Catalyzes the transfer of a ribosyl phosphate group from 5-phosphoribose 1-diphosphate to orotate, leading to the formation of orotidine monophosphate (OMP). This chain is Orotate phosphoribosyltransferase, found in Enterobacter sp. (strain 638).